The following is a 380-amino-acid chain: Palmitoyltransferase ZDHHC18 (380 aa).

The interval 1–59 (MKDCEYQQISPGAAPPPASPGARRPGPAAPPAPSPGPAPGAPRWSGSGSGSGSLGRRPR) is disordered. Residues 1-82 (MKDCEYQQIS…CGGRLMLAGH (82 aa)) lie on the Cytoplasmic side of the membrane. Phosphoserine is present on Ser19. The segment covering 27 to 40 (PAAPPAPSPGPAPG) has biased composition (pro residues). The chain crosses the membrane as a helical span at residues 83 to 103 (GGVFALTLLLILSTTILFFVF). The Lumenal segment spans residues 104–111 (DCPYLART). A helical transmembrane segment spans residues 112–132 (LTLAIPIIAAILFFFVMSCLL). The Cytoplasmic portion of the chain corresponds to 133-227 (QTSFTDPGIL…GNCVGRRNYR (95 aa)). The 51-residue stretch at 184–234 (KYCFTCKMFRPPRTSHCSVCDNCVERFDHHCPWVGNCVGRRNYRFFYAFIL) folds into the DHHC domain. Cys214 serves as the catalytic S-palmitoyl cysteine intermediate. A helical transmembrane segment spans residues 228-248 (FFYAFILSLSFLTAFIFACVV). Residues 249-269 (THLTLLSQGSNFLSALKKTPA) lie on the Lumenal side of the membrane. Residues 270–290 (SVLELVICFFSIWSILGLSGF) traverse the membrane as a helical segment. The Cytoplasmic portion of the chain corresponds to 291 to 380 (HTYLVASNLT…PDASMVGGHP (90 aa)). The tract at residues 355–380 (ALPSPIRSDDPACGAKPDASMVGGHP) is disordered.

Belongs to the DHHC palmitoyltransferase family. ERF2/ZDHHC9 subfamily. Ubiquitously expressed.

The protein resides in the golgi apparatus membrane. It catalyses the reaction L-cysteinyl-[protein] + hexadecanoyl-CoA = S-hexadecanoyl-L-cysteinyl-[protein] + CoA. In terms of biological role, palmitoyltransferase that catalyzes the addition of palmitate onto various protein substrates, such as CGAS, HRAS and LCK. Palmitoylates HRAS and LCK. Acts as a negative regulator of the cGAS-STING pathway be mediating palmitoylation and inactivation of CGAS. May also have a palmitoyltransferase activity toward the beta-2 adrenergic receptor/ADRB2 and therefore regulate G protein-coupled receptor signaling. This is Palmitoyltransferase ZDHHC18 from Mus musculus (Mouse).